Reading from the N-terminus, the 175-residue chain is Nudix hydrolase 25 (175 aa).

Residues 7–155 enclose the Nudix hydrolase domain; that stretch reads GYRPNVGVCL…KRPTYEEVIK (149 aa). Mn(2+)-binding residues include G40, E55, and E59. Residues 40–61 carry the Nudix box motif; the sequence is GGIEDGEDPKSAAMRELQEETG.

It belongs to the Nudix hydrolase family. It depends on Mn(2+) as a cofactor.

The enzyme catalyses P(1),P(4)-bis(5'-guanosyl) tetraphosphate + H2O = GMP + GTP + 2 H(+). Functionally, mediates the hydrolysis of diadenosine 5',5''-P(1)P(4) tetraphosphate (Ap(4)A), a signaling molecule involved in regulation of DNA replication and repair. This chain is Nudix hydrolase 25, found in Arabidopsis thaliana (Mouse-ear cress).